The sequence spans 180 residues: Large ribosomal subunit protein uL5 (180 aa).

It belongs to the universal ribosomal protein uL5 family. As to quaternary structure, part of the 50S ribosomal subunit; part of the 5S rRNA/L5/L18/L25 subcomplex. Contacts the 5S rRNA and the P site tRNA. Forms a bridge to the 30S subunit in the 70S ribosome.

In terms of biological role, this is one of the proteins that bind and probably mediate the attachment of the 5S RNA into the large ribosomal subunit, where it forms part of the central protuberance. In the 70S ribosome it contacts protein S13 of the 30S subunit (bridge B1b), connecting the 2 subunits; this bridge is implicated in subunit movement. Contacts the P site tRNA; the 5S rRNA and some of its associated proteins might help stabilize positioning of ribosome-bound tRNAs. The chain is Large ribosomal subunit protein uL5 from Streptococcus equi subsp. equi (strain 4047).